The primary structure comprises 272 residues: 4-hydroxy-tetrahydrodipicolinate reductase (272 aa).

12–17 (GALGKM) is a binding site for NAD(+). Lysine 39 is an NADP(+) binding site. Residues 102–104 (GTT) and 126–129 (SSNY) each bind NAD(+). The active-site Proton donor/acceptor is histidine 159. (S)-2,3,4,5-tetrahydrodipicolinate is bound at residue histidine 160. Lysine 163 acts as the Proton donor in catalysis. A (S)-2,3,4,5-tetrahydrodipicolinate-binding site is contributed by 169–170 (GT).

Belongs to the DapB family. Homotetramer.

It is found in the cytoplasm. It catalyses the reaction (S)-2,3,4,5-tetrahydrodipicolinate + NAD(+) + H2O = (2S,4S)-4-hydroxy-2,3,4,5-tetrahydrodipicolinate + NADH + H(+). It carries out the reaction (S)-2,3,4,5-tetrahydrodipicolinate + NADP(+) + H2O = (2S,4S)-4-hydroxy-2,3,4,5-tetrahydrodipicolinate + NADPH + H(+). Its pathway is amino-acid biosynthesis; L-lysine biosynthesis via DAP pathway; (S)-tetrahydrodipicolinate from L-aspartate: step 4/4. In terms of biological role, catalyzes the conversion of 4-hydroxy-tetrahydrodipicolinate (HTPA) to tetrahydrodipicolinate. The polypeptide is 4-hydroxy-tetrahydrodipicolinate reductase (Buchnera aphidicola subsp. Baizongia pistaciae (strain Bp)).